We begin with the raw amino-acid sequence, 1065 residues long: Carbamoyl phosphate synthase large chain (1065 aa).

Residues 1–401 (MPKRTDIETI…AMLKAVRSLE (401 aa)) form a carboxyphosphate synthetic domain region. ATP-binding residues include arginine 129, arginine 169, glycine 175, glycine 176, lysine 208, isoleucine 210, glutamate 215, glycine 241, isoleucine 242, histidine 243, glutamine 284, and glutamate 298. The 195-residue stretch at 133-327 (RNLMYELGAP…IAKLAAKIAV (195 aa)) folds into the ATP-grasp 1 domain. Mg(2+) contacts are provided by glutamine 284, glutamate 298, and asparagine 300. Positions 284, 298, and 300 each coordinate Mn(2+). Residues 402-546 (TGQVHLELKH…YGTYEEENES (145 aa)) form an oligomerization domain region. The carbamoyl phosphate synthetic domain stretch occupies residues 547 to 929 (IKSEKPSVVV…ALYKGLVAAG (383 aa)). The region spanning 671 to 861 (EQALRDLNIP…MANIATKAIL (191 aa)) is the ATP-grasp 2 domain. Residues arginine 707, arginine 746, leucine 748, glutamate 752, glycine 777, valine 778, histidine 779, serine 780, glutamine 820, and glutamate 832 each contribute to the ATP site. Mg(2+) contacts are provided by glutamine 820, glutamate 832, and asparagine 834. Glutamine 820, glutamate 832, and asparagine 834 together coordinate Mn(2+). The MGS-like domain occupies 930–1065 (MEIRTEGTVL…EEMPKAEVVH (136 aa)). The interval 930-1065 (MEIRTEGTVL…EEMPKAEVVH (136 aa)) is allosteric domain.

It belongs to the CarB family. Composed of two chains; the small (or glutamine) chain promotes the hydrolysis of glutamine to ammonia, which is used by the large (or ammonia) chain to synthesize carbamoyl phosphate. Tetramer of heterodimers (alpha,beta)4. Mg(2+) serves as cofactor. The cofactor is Mn(2+).

It carries out the reaction hydrogencarbonate + L-glutamine + 2 ATP + H2O = carbamoyl phosphate + L-glutamate + 2 ADP + phosphate + 2 H(+). It catalyses the reaction hydrogencarbonate + NH4(+) + 2 ATP = carbamoyl phosphate + 2 ADP + phosphate + 2 H(+). Its pathway is amino-acid biosynthesis; L-arginine biosynthesis; carbamoyl phosphate from bicarbonate: step 1/1. The protein operates within pyrimidine metabolism; UMP biosynthesis via de novo pathway; (S)-dihydroorotate from bicarbonate: step 1/3. Large subunit of the glutamine-dependent carbamoyl phosphate synthetase (CPSase). CPSase catalyzes the formation of carbamoyl phosphate from the ammonia moiety of glutamine, carbonate, and phosphate donated by ATP, constituting the first step of 2 biosynthetic pathways, one leading to arginine and/or urea and the other to pyrimidine nucleotides. The large subunit (synthetase) binds the substrates ammonia (free or transferred from glutamine from the small subunit), hydrogencarbonate and ATP and carries out an ATP-coupled ligase reaction, activating hydrogencarbonate by forming carboxy phosphate which reacts with ammonia to form carbamoyl phosphate. This Lysinibacillus sphaericus (strain C3-41) protein is Carbamoyl phosphate synthase large chain.